The sequence spans 191 residues: MIGRLTGTLAEKSPPQLLVDVGGVGYEVDVPMSTFYNLPVLGERVTLLTHFVVREDAQLLYGFLTATERATFRQLLKISGVGARTALSILSGLSVADLAQAVSAQEAGRLVKVPGIGKKTAERLLLELKGKLGPDLALPGAVIRNEAQSDIVQALIALGYNEREAAAAIKPLPADVGVSDGIKLALRALGK.

Positions Met1 to Leu64 are domain I. The tract at residues Thr65–Leu138 is domain II. The flexible linker stretch occupies residues Leu138–Val142. The tract at residues Ile143–Lys191 is domain III.

It belongs to the RuvA family. Homotetramer. Forms an RuvA(8)-RuvB(12)-Holliday junction (HJ) complex. HJ DNA is sandwiched between 2 RuvA tetramers; dsDNA enters through RuvA and exits via RuvB. An RuvB hexamer assembles on each DNA strand where it exits the tetramer. Each RuvB hexamer is contacted by two RuvA subunits (via domain III) on 2 adjacent RuvB subunits; this complex drives branch migration. In the full resolvosome a probable DNA-RuvA(4)-RuvB(12)-RuvC(2) complex forms which resolves the HJ.

It is found in the cytoplasm. Functionally, the RuvA-RuvB-RuvC complex processes Holliday junction (HJ) DNA during genetic recombination and DNA repair, while the RuvA-RuvB complex plays an important role in the rescue of blocked DNA replication forks via replication fork reversal (RFR). RuvA specifically binds to HJ cruciform DNA, conferring on it an open structure. The RuvB hexamer acts as an ATP-dependent pump, pulling dsDNA into and through the RuvAB complex. HJ branch migration allows RuvC to scan DNA until it finds its consensus sequence, where it cleaves and resolves the cruciform DNA. In Leptothrix cholodnii (strain ATCC 51168 / LMG 8142 / SP-6) (Leptothrix discophora (strain SP-6)), this protein is Holliday junction branch migration complex subunit RuvA.